A 92-amino-acid chain; its full sequence is Small ribosomal subunit protein uS19 (92 aa).

The disordered stretch occupies residues 73–92 (EFSPSRTYYGHAADKKAKRR).

Belongs to the universal ribosomal protein uS19 family.

In terms of biological role, protein S19 forms a complex with S13 that binds strongly to the 16S ribosomal RNA. This is Small ribosomal subunit protein uS19 from Maricaulis maris (strain MCS10) (Caulobacter maris).